A 227-amino-acid chain; its full sequence is Thymidylate kinase (227 aa).

ATP is bound at residue 16-23; sequence GIDGAGKT.

The protein belongs to the thymidylate kinase family.

The catalysed reaction is dTMP + ATP = dTDP + ADP. Functionally, phosphorylation of dTMP to form dTDP in both de novo and salvage pathways of dTTP synthesis. The sequence is that of Thymidylate kinase from Xanthomonas campestris pv. campestris (strain 8004).